Here is a 351-residue protein sequence, read N- to C-terminus: CCN family member 3 (351 aa).

A signal peptide spans 1–21 (MSVFLRKQCLCLGFLLLHLLN). The IGFBP N-terminal domain maps to 25–99 (ATLRCPSRCP…NNETGICMVP (75 aa)). 6 disulfides stabilise this stretch: Cys29-Cys55, Cys33-Cys57, Cys37-Cys58, Cys44-Cys61, Cys69-Cys83, and Cys75-Cys96. Residue Asn91 is glycosylated (N-linked (GlcNAc...) asparagine). Residues 102–168 (DNCVFDGVIY…GECCEKWTCG (67 aa)) enclose the VWFC domain. Positions 199-244 (NCIEQTTEWSACSKSCGMGLSTRVTNRNLQCEMVKQTRLCMVRPCE) constitute a TSP type-1 domain. Residue Cys238 is the site of S-palmitoyl cysteine attachment. Disulfide bonds link Cys258–Cys295, Cys275–Cys309, Cys286–Cys325, Cys289–Cys327, and Cys294–Cys331. The 75-residue stretch at 258-332 (CLRTKKSLKS…GTCTCHSNCP (75 aa)) folds into the CTCK domain. The N-linked (GlcNAc...) asparagine glycan is linked to Asn274.

This sequence belongs to the CCN family. Interacts with FBLN1. Interacts (via CTCK domain) with NOTCH1 (via the EGF-like repeat region). Interacts with GJA1/CX43. Interacts with ITGA5:ITGB1, ITGAV:ITGB3 and ITGAV:ITGB5. Interacts with ZDHHC22; the interaction may lead to CCN3 palmitoylation. In terms of processing, may be palmitoylated on Cys-238, which is important for extracellular secretion. In terms of tissue distribution, widely expressed. Highly expressed in neurons of dorsal root ganglia and dorsal horn of the spinal cord (at protein level). Expressed in astrocytes (at protein level). In cartilage, dominantly expressed in the chondrocyte territorial matrix.

It localises to the secreted. The protein resides in the cytoplasm. Its subcellular location is the cell junction. It is found in the gap junction. In terms of biological role, immediate-early protein playing a role in various cellular processes including proliferation, adhesion, migration, differentiation and survival. Acts by binding to integrins or membrane receptors such as NOTCH1. Essential regulator of hematopoietic stem and progenitor cell function. Inhibits myogenic differentiation through the activation of Notch-signaling pathway. Inhibits vascular smooth muscle cells proliferation by increasing expression of cell-cycle regulators such as CDKN2B or CDKN1A independently of TGFB1 signaling. Ligand of integrins ITGAV:ITGB3 and ITGA5:ITGB1, acts directly upon endothelial cells to stimulate pro-angiogenic activities and induces angiogenesis. In endothelial cells, supports cell adhesion, induces directed cell migration (chemotaxis) and promotes cell survival. Also plays a role in cutaneous wound healing acting as integrin receptor ligand. Supports skin fibroblast adhesion through ITGA5:ITGB1 and ITGA6:ITGB1 and induces fibroblast chemotaxis through ITGAV:ITGB5. Seems to enhance bFGF-induced DNA synthesis in fibroblasts. Involved in bone regeneration as a negative regulator. Enhances the articular chondrocytic phenotype, whereas it repressed the one representing endochondral ossification. Impairs pancreatic beta-cell function, inhibits beta-cell proliferation and insulin secretion. Plays a role as negative regulator of endothelial pro-inflammatory activation reducing monocyte adhesion, its anti-inflammatory effects occur secondary to the inhibition of NF-kappaB signaling pathway. Contributes to the control and coordination of inflammatory processes in atherosclerosis. Attenuates inflammatory pain through regulation of IL1B- and TNF-induced MMP9, MMP2 and CCL2 expression. Inhibits MMP9 expression through ITGB1 engagement. Brain osteoanabolic hormone. During lactation, maintains the maternal skeleton and viability of offspring. The polypeptide is CCN family member 3 (Ccn3) (Rattus norvegicus (Rat)).